We begin with the raw amino-acid sequence, 521 residues long: 2-isopropylmalate synthase (521 aa).

One can recognise a Pyruvate carboxyltransferase domain in the interval 12–274 (VIIFDTTLRD…WNKIDTTMLT (263 aa)). Positions 21, 209, 211, and 245 each coordinate Mn(2+). Positions 398-521 (KLLSLTVIAG…DLPVPEAAAS (124 aa)) are regulatory domain.

The protein belongs to the alpha-IPM synthase/homocitrate synthase family. LeuA type 1 subfamily. As to quaternary structure, homodimer. It depends on Mn(2+) as a cofactor.

Its subcellular location is the cytoplasm. The enzyme catalyses 3-methyl-2-oxobutanoate + acetyl-CoA + H2O = (2S)-2-isopropylmalate + CoA + H(+). The protein operates within amino-acid biosynthesis; L-leucine biosynthesis; L-leucine from 3-methyl-2-oxobutanoate: step 1/4. Its function is as follows. Catalyzes the condensation of the acetyl group of acetyl-CoA with 3-methyl-2-oxobutanoate (2-ketoisovalerate) to form 3-carboxy-3-hydroxy-4-methylpentanoate (2-isopropylmalate). This Rhodopseudomonas palustris (strain BisB18) protein is 2-isopropylmalate synthase.